The chain runs to 807 residues: Histone transcription regulator slm9 (807 aa).

WD repeat units follow at residues 62–100 and 102–140; these read SFDS…KAFQ and LSGP…ETIV. The interval 144 to 164 is disordered; the sequence is EHADSNHQPAVSIEESKEAVE. 4 WD repeats span residues 182-221, 230-273, 276-322, and 326-367; these read GHHT…VEKS, PTGN…YDIN, GHQG…PMAV, and LSCS…EKMD. A disordered region spans residues 388–437; that stretch reads NKNAAADRTTSPTQGQPESPSKSILLRPPPSIASSPESKRRKCPKKFVAR. A compositionally biased stretch (polar residues) spans 395–409; the sequence is RTTSPTQGQPESPSK. 3 positions are modified to phosphoserine: S406, S421, and S422. Residues 426 to 435 show a composition bias toward basic residues; sequence KRRKCPKKFV. 2 WD repeats span residues 492 to 526 and 528 to 574; these read DCSW…YIYS and AGRL…AIHS.

The protein belongs to the WD repeat HIR1 family. In terms of assembly, interacts with hip1 and hip3.

The protein localises to the cytoplasm. It localises to the nucleus. Its function is as follows. Probably required for replication-independent chromatin assembly. Required for transcriptional silencing in the outer repeat (otr) centromeric repeats and the Tf2 long terminal repeat retrotransposons. May play an indirect role in the regulation of cdc2 and/or wee1 at the G2/M stage of mitosis. The polypeptide is Histone transcription regulator slm9 (slm9) (Schizosaccharomyces pombe (strain 972 / ATCC 24843) (Fission yeast)).